Reading from the N-terminus, the 442-residue chain is Ribosomal protein uS12 methylthiotransferase RimO (442 aa).

Residues 5–117 (PSIGVVSLGC…VLDAIHAALP (113 aa)) form the MTTase N-terminal domain. The [4Fe-4S] cluster site is built by Cys14, Cys50, Cys79, Cys148, Cys152, and Cys155. Residues 134–371 (LTPPHYAYLK…MAVQEAISRQ (238 aa)) enclose the Radical SAM core domain. The TRAM domain maps to 374 to 441 (QRRVGQRQRV…AHDLYGMVVS (68 aa)).

It belongs to the methylthiotransferase family. RimO subfamily. It depends on [4Fe-4S] cluster as a cofactor.

The protein localises to the cytoplasm. The enzyme catalyses L-aspartate(89)-[ribosomal protein uS12]-hydrogen + (sulfur carrier)-SH + AH2 + 2 S-adenosyl-L-methionine = 3-methylsulfanyl-L-aspartate(89)-[ribosomal protein uS12]-hydrogen + (sulfur carrier)-H + 5'-deoxyadenosine + L-methionine + A + S-adenosyl-L-homocysteine + 2 H(+). Functionally, catalyzes the methylthiolation of an aspartic acid residue of ribosomal protein uS12. The sequence is that of Ribosomal protein uS12 methylthiotransferase RimO from Acidithiobacillus ferrooxidans (strain ATCC 53993 / BNL-5-31) (Leptospirillum ferrooxidans (ATCC 53993)).